Reading from the N-terminus, the 554-residue chain is Afadin- and alpha-actinin-binding protein A (554 aa).

2 coiled-coil regions span residues 122–287 and 359–449; these read LEYL…SQRK and ENGL…AIRL. Residues 508-528 are disordered; it reads LASSGDYSRRPSKALPITSSS.

It belongs to the ADIP family. Interacts with WRAP73.

It is found in the cell junction. The protein resides in the adherens junction. Its subcellular location is the cytoplasm. It localises to the cytoskeleton. The protein localises to the microtubule organizing center. It is found in the centrosome. The protein resides in the centriolar satellite. Its function is as follows. Belongs to an adhesion system, which plays a role in the organization of homotypic, interneuronal and heterotypic cell-cell adherens junctions (AJs). Involved in cell movement. Acts as a centrosome maturation factor, probably by maintaining the integrity of the pericentriolar material and proper microtubule nucleation at mitotic spindle poles. The function seems to implicate at least in part WRAP73; the SSX2IP:WRAP73 complex is proposed to act as regulator of spindle anchoring at the mitotic centrosome. The chain is Afadin- and alpha-actinin-binding protein A (ssx2ip-a) from Xenopus laevis (African clawed frog).